Reading from the N-terminus, the 192-residue chain is NADH dehydrogenase [ubiquinone] iron-sulfur protein 3 (192 aa).

The protein belongs to the complex I 30 kDa subunit family. In terms of assembly, complex I is composed of about 45 different subunits. This is a component of the iron-sulfur (IP) fragment of the enzyme.

The protein localises to the mitochondrion inner membrane. It catalyses the reaction a ubiquinone + NADH + 5 H(+)(in) = a ubiquinol + NAD(+) + 4 H(+)(out). Functionally, core subunit of the mitochondrial membrane respiratory chain NADH dehydrogenase (Complex I) that is believed to belong to the minimal assembly required for catalysis. Complex I functions in the transfer of electrons from NADH to the respiratory chain. The immediate electron acceptor for the enzyme is believed to be ubiquinone. This chain is NADH dehydrogenase [ubiquinone] iron-sulfur protein 3 (NAD9), found in Beta vulgaris (Sugar beet).